A 797-amino-acid chain; its full sequence is Peroxisome proliferator-activated receptor gamma coactivator 1-alpha (797 aa).

The residue at position 77 (lysine 77) is an N6-acetyllysine. The tract at residues 101 to 138 is disordered; that stretch reads EDGLPSFDALTDGAVTTDNEASPSSMPDGTPPPQEAEE. Residues 114–127 are compositionally biased toward polar residues; the sequence is AVTTDNEASPSSMP. An LXXLL motif motif is present at residues 142 to 146; it reads LKKLL. At lysine 144 the chain carries N6-acetyllysine. A Phosphothreonine; by AMPK modification is found at threonine 177. Lysine 183 is subject to N6-acetyllysine. The interval 212–276 is disordered; it reads YLTTNDDPPH…NDPKGSPFEN (65 aa). The span at 218 to 236 shows a compositional bias: basic and acidic residues; it reads DPPHTKPTENRNSSRDKCA. The span at 243 to 259 shows a compositional bias: polar residues; that stretch reads TQPQSQHAQAKPTTLSL. Residues lysine 253, lysine 270, lysine 277, lysine 320, lysine 346, lysine 412, lysine 441, and lysine 450 each carry the N6-acetyllysine modification. Positions 289-376 are disordered; it reads GTAGLTPPTT…HEERKTKRPS (88 aa). The tract at residues 292 to 338 is interaction with PPARG; sequence GLTPPTTPPHKANQDNPFKASPKLKPSCKTVVPPPTKRARYSECSGT. The mediates interaction with RNF34 stretch occupies residues 349 to 797; sequence EQSELYAQLS…LKEAQRSLRR (449 aa). The residue at position 538 (serine 538) is a Phosphoserine; by AMPK. 3 disordered regions span residues 543–598, 612–634, and 648–668; these read NSPC…SSRS, HRNS…PRYD, and EYRK…ERQK. A compositionally biased stretch (basic residues) spans 562–577; that stretch reads QRMRSRSRSFSRHRSC. Positions 578–598 are enriched in low complexity; the sequence is SRSPYSRSRSRSPGSRSSSRS. Over residues 621–630 the composition is skewed to basic residues; sequence SRSRSPYSRR. In terms of domain architecture, RRM spans 676-752; the sequence is RVIYVGKIRP…TDFELYFCGR (77 aa). 2 positions are modified to N6-acetyllysine: lysine 757 and lysine 778.

As to quaternary structure, homooligomer. Interacts with MYBBP1A; inhibits MYBBP1A transcriptional activation. Interacts with PRDM16, LPIN1 and PML. Interacts (via LXXLL motif) with RORA and RORC (via AF-2 motif); activates RORA and RORC transcriptional activation. Interacts with LRPPRC. Interacts with FOXO1. Interacts with NR5A2. Phosphorylation by AMPK in skeletal muscle increases activation of its own promoter. Phosphorylated by CLK2. In terms of processing, heavily acetylated by KAT2A/GCN5 under conditions of high nutrients, leading to inactivation of PPARGC1A. Deacetylated by SIRT1 in low nutrients/high NAD conditions, leading to its activation. Post-translationally, ubiquitinated. Ubiquitination by RNF34 induces proteasomal degradation. White quadriceps and red tibialis anterior (TA) muscles, liver, kidney and brown adipose tissue (at protein level). Skeletal muscle, brown adipose tissue, heart, kidney and brain.

It localises to the nucleus. The protein localises to the PML body. In terms of biological role, transcriptional coactivator for steroid receptors and nuclear receptors. Greatly increases the transcriptional activity of PPARG and thyroid hormone receptor on the uncoupling protein promoter. Can regulate key mitochondrial genes that contribute to the program of adaptive thermogenesis. Plays an essential role in metabolic reprogramming in response to dietary availability through coordination of the expression of a wide array of genes involved in glucose and fatty acid metabolism. Acts as a key regulator of gluconeogenesis: stimulates hepatic gluconeogenesis by increasing the expression of gluconeogenic enzymes, and acting together with FOXO1 to promote the fasting gluconeogenic program. Induces the expression of PERM1 in the skeletal muscle in an ESRRA-dependent manner. Also involved in the integration of the circadian rhythms and energy metabolism. Required for oscillatory expression of clock genes, such as BMAL1 and NR1D1, through the coactivation of RORA and RORC, and metabolic genes, such as PDK4 and PEPCK. The sequence is that of Peroxisome proliferator-activated receptor gamma coactivator 1-alpha (Ppargc1a) from Mus musculus (Mouse).